A 413-amino-acid polypeptide reads, in one-letter code: MPSSISWGLLLLAALSCLGPGSLAQDAQETEASKQDQEHPASHRIAPHLAEFALSLYRVLARQSNTTNIFFSPVSIATALAMLSLGTKGDTHTQILEGLDFNLTEMAEADIHQGFQHLLQTLNRPNTQLQLTSGNGLFIHQNLKLLDKFLEDVKSLYHSEAFPTNFTNMEEARQQINSYVEKGTQGKIVELVKELDSDTVLALVNYIFFKGKWLKPFNEEHTREEDFHVDEATTVRVPMMNREGRFHLHHCSTLASWVLQMDYLGNATAIFLLPDEGKMQHLEDTVSTEILSKFLKNRQTTRVSLYFPKVSISGTYALKTVLSSLGITKVFSNAADLSGVTEEAPLIVSKALHKAVLDIDEEGTEAAGATVGGITFMSRPKEVIFDRPFLVVIYEHHTKSPLFVGKVVNPTQQ.

The signal sequence occupies residues 1–24 (MPSSISWGLLLLAALSCLGPGSLA). Position 25 is a pyrrolidone carboxylic acid (Gln25). N-linked (GlcNAc...) asparagine glycosylation is found at Asn65, Asn102, Asn165, and Asn266. Positions 368–387 (GATVGGITFMSRPKEVIFDR) are RCL.

It belongs to the serpin family. In terms of tissue distribution, expressed in liver.

The protein resides in the secreted. Serine protease inhibitor. The sequence is that of Alpha-1-antitrypsin-like protein CM55-MS from Tamias sibiricus (Siberian chipmunk).